The following is a 209-amino-acid chain: Large ribosomal subunit protein bL25 (209 aa).

Belongs to the bacterial ribosomal protein bL25 family. CTC subfamily. Part of the 50S ribosomal subunit; part of the 5S rRNA/L5/L18/L25 subcomplex. Contacts the 5S rRNA. Binds to the 5S rRNA independently of L5 and L18.

Its function is as follows. This is one of the proteins that binds to the 5S RNA in the ribosome where it forms part of the central protuberance. The polypeptide is Large ribosomal subunit protein bL25 (Xanthomonas campestris pv. campestris (strain B100)).